A 205-amino-acid chain; its full sequence is Large ribosomal subunit protein uL4 (205 aa).

The tract at residues 44–79 (RAGTKAQKTRREVSGGGAKPWRQKGTGRARAGSSRS) is disordered.

Belongs to the universal ribosomal protein uL4 family. As to quaternary structure, part of the 50S ribosomal subunit.

One of the primary rRNA binding proteins, this protein initially binds near the 5'-end of the 23S rRNA. It is important during the early stages of 50S assembly. It makes multiple contacts with different domains of the 23S rRNA in the assembled 50S subunit and ribosome. Its function is as follows. Forms part of the polypeptide exit tunnel. This chain is Large ribosomal subunit protein uL4, found in Coxiella burnetii (strain RSA 331 / Henzerling II).